The chain runs to 311 residues: Putative prophage capsid protein YqbE (311 aa).

The protein belongs to the encapsulin family. Family 3 subfamily.

Functionally, possibly a prophage capsid protein. The chain is Putative prophage capsid protein YqbE (yqbE) from Bacillus subtilis (strain 168).